A 135-amino-acid polypeptide reads, in one-letter code: Class I hydrophobin dewA (135 aa).

Positions 1–18 (MRFIVSLLAFTAAATATA) are cleaved as a signal peptide. Intrachain disulfides connect cysteine 44–cysteine 114, cysteine 51–cysteine 108, cysteine 52–cysteine 84, and cysteine 115–cysteine 122. Asparagine 60 carries N-linked (GlcNAc...) asparagine glycosylation.

It belongs to the fungal hydrophobin family. In terms of assembly, forms homodimers at high concentrations, and these dimers are off-pathway to rodlet formation. Dissociation of the dimers into monomers, with resultant exposure of the hydrophobic face, is necessary for self-assembly to form functional amyloid fibrils called rodlets. Self-assembly into fibrillar rodlets occurs spontaneously at hydrophobic:hydrophilic interfaces and the rodlets further associate laterally to form amphipathic monolayers.

Its subcellular location is the secreted. It localises to the spore wall. Aerial growth, conidiation, and dispersal of filamentous fungi in the environment rely upon a capability of their secreting small amphipathic proteins called hydrophobins (HPBs) with low sequence identity. Class I can self-assemble into an outermost layer of rodlet bundles on aerial cell surfaces, conferring cellular hydrophobicity that supports fungal growth, development and dispersal; whereas Class II form highly ordered films at water-air interfaces through intermolecular interactions but contribute nothing to the rodlet structure. DewA is a class I hydrophobin that contributes to spore wall hydrophobicity. This chain is Class I hydrophobin dewA, found in Emericella nidulans (strain FGSC A4 / ATCC 38163 / CBS 112.46 / NRRL 194 / M139) (Aspergillus nidulans).